We begin with the raw amino-acid sequence, 618 residues long: Syncytin-B (618 aa).

Positions 1–17 (MTGFWVLCFVLFPSSLS) are cleaved as a signal peptide. At 18–545 (YPESWMPLVN…SWGQWPDLGR (528 aa)) the chain is on the extracellular side. A glycan (N-linked (GlcNAc...) asparagine) is linked at Asn27. The CXXC motif lies at 44-47 (CWVC). Disulfide bonds link Cys44–Cys47, Cys44–Cys507, and Cys499–Cys506. N-linked (GlcNAc...) asparagine glycans are attached at residues Asn184, Asn274, and Asn357. Positions 422-442 (LFPFLAGLGISSALGTGIAGL) are fusion peptide. Positions 482–498 (LQNRRALDLITAEKGGT) are immunosuppression. A CX6CC motif is present at residues 499–507 (CLFLQEECC). Residues 546 to 566 (WLPWLTPFLGPLLFLFFLLTF) traverse the membrane as a helical segment. The Cytoplasmic portion of the chain corresponds to 567-618 (GSCLLNCLTRFVSQRLGSFVQDTAKRHVDSILQNFQYKKLPQDSPDEDTIPT).

This sequence belongs to the gamma type-C retroviral envelope protein family. The mature protein consists of a trimer of SU-TM heterodimers. The SU-TM heterodimers are attached by a labile interchain disulfide bond. Synthesized as an inactive precursor that is heavily N-glycosylated and processed likely by furin in the Golgi to yield the mature SU and TM proteins. The cleavage site between SU and TM requires the minimal sequence [KR]-X-[KR]-R. In terms of processing, the CXXC motif is highly conserved across a broad range of retroviral envelope proteins. It is thought to participate in the formation of a labile disulfide bond possibly with the CX6CC motif present in the transmembrane protein. Isomerization of the intersubunit disulfide bond to an SU intrachain disulfide bond is thought to occur upon receptor recognition in order to allow membrane fusion. Highly expressed in placenta where it localizes to syncytiotrophoblasts of the labyrinthine zona. Specifically localizes to syncytiotrophoblast layer II (SynT-II). Also detected at very low levels in ovary.

The protein localises to the cell membrane. Its function is as follows. This endogenous retroviral envelope protein has retained its original fusogenic properties. Together with Syna, participates in trophoblast fusion and the formation of a syncytium during placenta morphogenesis. Synb is specifically involved in formation of syncytiotrophoblast layer II (SynT-II). Promotes myoblast fusion, and may play a role in regeneration of damaged muscle tissue in males. May have immunosuppressive activity. The chain is Syncytin-B from Mus musculus (Mouse).